The sequence spans 632 residues: Golgin subfamily A member 8J (632 aa).

Residues 1–76 (MAEETQHNKL…TSSATLKDLE (76 aa)) form a disordered region. Coiled-coil stretches lie at residues 86–154 (LDSR…HMKR) and 220–421 (LKVQ…SLMA). Composition is skewed to basic and acidic residues over residues 352–362 (KQEERIQEQHK) and 427–440 (HGGE…EEAP). Disordered regions lie at residues 352-377 (KQEE…FKEP), 423-452 (PGEG…DPES), and 496-524 (LSEP…DEGE). Gly residues predominate over residues 508 to 520 (LGGGHHQAGAQGG).

This sequence belongs to the GOLGA8 family.

The chain is Golgin subfamily A member 8J (GOLGA8J) from Homo sapiens (Human).